Here is a 353-residue protein sequence, read N- to C-terminus: Nicotinate-nucleotide--dimethylbenzimidazole phosphoribosyltransferase (353 aa).

The Proton acceptor role is filled by E318.

This sequence belongs to the CobT family.

It carries out the reaction 5,6-dimethylbenzimidazole + nicotinate beta-D-ribonucleotide = alpha-ribazole 5'-phosphate + nicotinate + H(+). Its pathway is nucleoside biosynthesis; alpha-ribazole biosynthesis; alpha-ribazole from 5,6-dimethylbenzimidazole: step 1/2. Functionally, catalyzes the synthesis of alpha-ribazole-5'-phosphate from nicotinate mononucleotide (NAMN) and 5,6-dimethylbenzimidazole (DMB). This is Nicotinate-nucleotide--dimethylbenzimidazole phosphoribosyltransferase from Chloroflexus aggregans (strain MD-66 / DSM 9485).